The following is a 237-amino-acid chain: Oligoribonuclease, mitochondrial (237 aa).

The transit peptide at 1–25 (MLGGSLGSRLLRGVGGTRGQFRARG) directs the protein to the mitochondrion. One can recognise an Exonuclease domain in the interval 43 to 207 (MVWVDLEMTG…DDISESIKEL (165 aa)). The Mg(2+) site is built by aspartate 47 and glutamate 49. The residue at position 92 (serine 92) is a Phosphoserine. At tyrosine 122 the chain carries Phosphotyrosine. Position 147 (aspartate 147) interacts with Mg(2+). Position 173 is an N6-acetyllysine (lysine 173). Histidine 194 is an active-site residue. Residue aspartate 199 participates in Mg(2+) binding.

It belongs to the oligoribonuclease family. As to quaternary structure, homodimer. Homotetramer. The cofactor is Mn(2+). Requires Mg(2+) as cofactor.

Its subcellular location is the mitochondrion intermembrane space. The protein resides in the mitochondrion matrix. The protein localises to the mitochondrion. It localises to the cytoplasm. It is found in the nucleus. Functionally, 3'-to-5'exoribonuclease that preferentially degrades DNA and RNA oligonucleotides composed of only two nucleotides. Binds and degrades longer oligonucleotides with a lower affinity. Plays dual roles in mitochondria, scavenging nanoRNAs (small RNA oligonucleotides of &lt;5 nucleotides) that are produced by the degradosome and clearing short RNAs that are generated by RNA processing. Essential for correct initiation of mitochondrial transcription, degrading mitochondrial RNA dinucleotides to prevent RNA-primed transcription at non-canonical sites in the mitochondrial genome. Essential for embryonic development. This Bos taurus (Bovine) protein is Oligoribonuclease, mitochondrial (REXO2).